The primary structure comprises 242 residues: Interleukin-34 (242 aa).

An N-terminal signal peptide occupies residues Met1 to Gly20. Asn76 carries N-linked (GlcNAc...) asparagine glycosylation. The disordered stretch occupies residues Thr210–Pro242. Over residues Tyr213–Pro223 the composition is skewed to pro residues.

This sequence belongs to the IL-34 family. Homodimer. Interacts with CSF1R. In terms of tissue distribution, detected in the sinusoidal epithelium in the red pulp of spleen (at protein level). Predominantly expressed in spleen. Also detected in a range of other tissues including heart, brain, lung, liver, kidney, thymus, testis, ovary, small intestine, prostate and colon.

It localises to the secreted. Cytokine that promotes the proliferation, survival and differentiation of monocytes and macrophages. Promotes the release of pro-inflammatory chemokines, and thereby plays an important role in innate immunity and in inflammatory processes. Plays an important role in the regulation of osteoclast proliferation and differentiation, and in the regulation of bone resorption. Signaling via CSF1R and its downstream effectors stimulates phosphorylation of MAPK1/ERK2 AND MAPK3/ERK1. In Homo sapiens (Human), this protein is Interleukin-34 (IL34).